A 233-amino-acid polypeptide reads, in one-letter code: Biosynthetic peptidoglycan transglycosylase (233 aa).

A helical membrane pass occupies residues 8–28; the sequence is LIALPVGIFIFFNAYVYGNII.

This sequence belongs to the glycosyltransferase 51 family.

It is found in the cell inner membrane. The enzyme catalyses [GlcNAc-(1-&gt;4)-Mur2Ac(oyl-L-Ala-gamma-D-Glu-L-Lys-D-Ala-D-Ala)](n)-di-trans,octa-cis-undecaprenyl diphosphate + beta-D-GlcNAc-(1-&gt;4)-Mur2Ac(oyl-L-Ala-gamma-D-Glu-L-Lys-D-Ala-D-Ala)-di-trans,octa-cis-undecaprenyl diphosphate = [GlcNAc-(1-&gt;4)-Mur2Ac(oyl-L-Ala-gamma-D-Glu-L-Lys-D-Ala-D-Ala)](n+1)-di-trans,octa-cis-undecaprenyl diphosphate + di-trans,octa-cis-undecaprenyl diphosphate + H(+). Its pathway is cell wall biogenesis; peptidoglycan biosynthesis. Functionally, peptidoglycan polymerase that catalyzes glycan chain elongation from lipid-linked precursors. The protein is Biosynthetic peptidoglycan transglycosylase of Neisseria meningitidis serogroup B (strain ATCC BAA-335 / MC58).